Consider the following 319-residue polypeptide: Ribose-phosphate pyrophosphokinase (319 aa).

Residues 41 to 43 (NGE) and 100 to 101 (RQ) each bind ATP. Residues histidine 134 and aspartate 175 each contribute to the Mg(2+) site. Residue lysine 198 is part of the active site. D-ribose 5-phosphate contacts are provided by residues arginine 200, aspartate 224, and 228–232 (DTAGS).

It belongs to the ribose-phosphate pyrophosphokinase family. Class I subfamily. As to quaternary structure, homohexamer. It depends on Mg(2+) as a cofactor.

It is found in the cytoplasm. It carries out the reaction D-ribose 5-phosphate + ATP = 5-phospho-alpha-D-ribose 1-diphosphate + AMP + H(+). It participates in metabolic intermediate biosynthesis; 5-phospho-alpha-D-ribose 1-diphosphate biosynthesis; 5-phospho-alpha-D-ribose 1-diphosphate from D-ribose 5-phosphate (route I): step 1/1. In terms of biological role, involved in the biosynthesis of the central metabolite phospho-alpha-D-ribosyl-1-pyrophosphate (PRPP) via the transfer of pyrophosphoryl group from ATP to 1-hydroxyl of ribose-5-phosphate (Rib-5-P). The polypeptide is Ribose-phosphate pyrophosphokinase (Clostridium acetobutylicum (strain ATCC 824 / DSM 792 / JCM 1419 / IAM 19013 / LMG 5710 / NBRC 13948 / NRRL B-527 / VKM B-1787 / 2291 / W)).